Consider the following 210-residue polypeptide: uncharacterized protein (210 aa).

This is an uncharacterized protein from Nostoc sp. (strain PCC 7120 / SAG 25.82 / UTEX 2576).